The following is a 1776-amino-acid chain: Histone transcription regulator 3 homolog (1776 aa).

Disordered stretches follow at residues 180–218 (IPVPEDESTHDDDVEKNDSKEVDKENNEVPDGEILIDEG), 241–260 (NDGKETQDSKNPSEKDVEGS), and 1709–1776 (ADTI…SASE). Over residues 190-206 (DDDVEKNDSKEVDKENN) the composition is skewed to basic and acidic residues. Basic and acidic residues-rich tracts occupy residues 1716–1742 (NNDKSPKNNGIKDNENSIPDSRARTLD) and 1766–1776 (LNSDHHDSASE).

It belongs to the HIR3 family.

The protein resides in the nucleus. Has a role in a nucleosome assembly pathway that is required for the integrity of heterochromatin and proper chromosome segregation. The sequence is that of Histone transcription regulator 3 homolog (HIR3) from Debaryomyces hansenii (strain ATCC 36239 / CBS 767 / BCRC 21394 / JCM 1990 / NBRC 0083 / IGC 2968) (Yeast).